The following is a 357-amino-acid chain: Membrane-bound lytic murein transglycosylase C (357 aa).

An N-terminal signal peptide occupies residues 1 to 15 (MKKYLLLALLPFLYA). Cys16 carries the N-palmitoyl cysteine lipid modification. Cys16 carries S-diacylglycerol cysteine lipidation.

The protein belongs to the transglycosylase Slt family.

It localises to the cell outer membrane. It carries out the reaction Exolytic cleavage of the (1-&gt;4)-beta-glycosidic linkage between N-acetylmuramic acid (MurNAc) and N-acetylglucosamine (GlcNAc) residues in peptidoglycan, from either the reducing or the non-reducing ends of the peptidoglycan chains, with concomitant formation of a 1,6-anhydrobond in the MurNAc residue.. In terms of biological role, murein-degrading enzyme. May play a role in recycling of muropeptides during cell elongation and/or cell division. This is Membrane-bound lytic murein transglycosylase C from Haemophilus influenzae (strain PittGG).